The primary structure comprises 126 residues: Protein ApaG (126 aa).

The 125-residue stretch at 2–126 (SDPRYQIDVS…FRLAVPGALH (125 aa)) folds into the ApaG domain.

The polypeptide is Protein ApaG (Pseudomonas putida (strain ATCC 700007 / DSM 6899 / JCM 31910 / BCRC 17059 / LMG 24140 / F1)).